Consider the following 132-residue polypeptide: Small ribosomal subunit protein uS9 (132 aa).

Belongs to the universal ribosomal protein uS9 family.

This is Small ribosomal subunit protein uS9 from Leptospira borgpetersenii serovar Hardjo-bovis (strain JB197).